The primary structure comprises 521 residues: Jacalin-related lectin 38 (521 aa).

Positions 2-48 (MQPDHDLPYDLEGEILSHLPIQILARFRCVCKRWNTLFKERRFFNSD) constitute an F-box domain. Kelch repeat units follow at residues 145 to 190 (KHYK…PYSV), 326 to 373 (YIYI…ITQH), and 486 to 521 (MSFVLGGARGSKIIGFYGRSSDLYLTAFGVHFSPLP). In terms of domain architecture, Jacalin-type lectin spans 377 to 519 (SRFAPLRGIQ…LTAFGVHFSP (143 aa)).

This sequence belongs to the jacalin lectin family.

The polypeptide is Jacalin-related lectin 38 (JAL38) (Arabidopsis thaliana (Mouse-ear cress)).